The sequence spans 224 residues: Phosphoribosylformylglycinamidine synthase subunit PurQ (224 aa).

In terms of domain architecture, Glutamine amidotransferase type-1 spans 4–224 (RIGVITFPGT…YSALDSVLAS (221 aa)). The active-site Nucleophile is Cys87. Catalysis depends on residues His195 and Glu197.

As to quaternary structure, part of the FGAM synthase complex composed of 1 PurL, 1 PurQ and 2 PurS subunits.

Its subcellular location is the cytoplasm. The enzyme catalyses N(2)-formyl-N(1)-(5-phospho-beta-D-ribosyl)glycinamide + L-glutamine + ATP + H2O = 2-formamido-N(1)-(5-O-phospho-beta-D-ribosyl)acetamidine + L-glutamate + ADP + phosphate + H(+). The catalysed reaction is L-glutamine + H2O = L-glutamate + NH4(+). It functions in the pathway purine metabolism; IMP biosynthesis via de novo pathway; 5-amino-1-(5-phospho-D-ribosyl)imidazole from N(2)-formyl-N(1)-(5-phospho-D-ribosyl)glycinamide: step 1/2. Part of the phosphoribosylformylglycinamidine synthase complex involved in the purines biosynthetic pathway. Catalyzes the ATP-dependent conversion of formylglycinamide ribonucleotide (FGAR) and glutamine to yield formylglycinamidine ribonucleotide (FGAM) and glutamate. The FGAM synthase complex is composed of three subunits. PurQ produces an ammonia molecule by converting glutamine to glutamate. PurL transfers the ammonia molecule to FGAR to form FGAM in an ATP-dependent manner. PurS interacts with PurQ and PurL and is thought to assist in the transfer of the ammonia molecule from PurQ to PurL. The polypeptide is Phosphoribosylformylglycinamidine synthase subunit PurQ (Mycobacterium leprae (strain TN)).